The chain runs to 746 residues: 4-hydroxy-3-methylbut-2-en-1-yl diphosphate synthase (flavodoxin) (746 aa).

[4Fe-4S] cluster is bound by residues Cys-653, Cys-656, Cys-687, and Glu-694.

The protein belongs to the IspG family. [4Fe-4S] cluster is required as a cofactor.

It carries out the reaction (2E)-4-hydroxy-3-methylbut-2-enyl diphosphate + oxidized [flavodoxin] + H2O + 2 H(+) = 2-C-methyl-D-erythritol 2,4-cyclic diphosphate + reduced [flavodoxin]. The protein operates within isoprenoid biosynthesis; isopentenyl diphosphate biosynthesis via DXP pathway; isopentenyl diphosphate from 1-deoxy-D-xylulose 5-phosphate: step 5/6. Its function is as follows. Converts 2C-methyl-D-erythritol 2,4-cyclodiphosphate (ME-2,4cPP) into 1-hydroxy-2-methyl-2-(E)-butenyl 4-diphosphate. In Chlorobaculum tepidum (strain ATCC 49652 / DSM 12025 / NBRC 103806 / TLS) (Chlorobium tepidum), this protein is 4-hydroxy-3-methylbut-2-en-1-yl diphosphate synthase (flavodoxin).